A 529-amino-acid chain; its full sequence is Methionine--tRNA ligase (529 aa).

The short motif at Tyr12–Ser22 is the 'HIGH' region element. Zn(2+)-binding residues include Cys127, Cys130, Cys145, and His148. Residues Lys301 to Ser305 carry the 'KMSKS' region motif. Lys304 provides a ligand contact to ATP.

This sequence belongs to the class-I aminoacyl-tRNA synthetase family. MetG type 2A subfamily. Monomer. It depends on Zn(2+) as a cofactor.

It is found in the cytoplasm. It carries out the reaction tRNA(Met) + L-methionine + ATP = L-methionyl-tRNA(Met) + AMP + diphosphate. In terms of biological role, is required not only for elongation of protein synthesis but also for the initiation of all mRNA translation through initiator tRNA(fMet) aminoacylation. The polypeptide is Methionine--tRNA ligase (Thermosynechococcus vestitus (strain NIES-2133 / IAM M-273 / BP-1)).